The sequence spans 543 residues: Cysteine/serine-rich nuclear protein 2 (543 aa).

M1 is subject to N-acetylmethionine. Disordered stretches follow at residues 1–51 (MDAF…SFTP), 281–305 (KRQV…LTGA), and 488–543 (DCNP…PLAV). A compositionally biased stretch (low complexity) spans 31 to 40 (SSDSADSCDS). Composition is skewed to polar residues over residues 42–51 (NPPTTASFTP) and 296–305 (PTASCSLTGA).

The protein belongs to the AXUD1 family.

The protein resides in the nucleus. Its function is as follows. Binds to the consensus sequence 5'-AGAGTG-3' and has transcriptional activator activity. May play a role in apoptosis. In Homo sapiens (Human), this protein is Cysteine/serine-rich nuclear protein 2 (CSRNP2).